Reading from the N-terminus, the 171-residue chain is Protein GrpE (171 aa).

The tract at residues 1–20 (MNEEKEESPSTEAEGAGAEV) is disordered.

The protein belongs to the GrpE family. In terms of assembly, homodimer.

It is found in the cytoplasm. Participates actively in the response to hyperosmotic and heat shock by preventing the aggregation of stress-denatured proteins, in association with DnaK and GrpE. It is the nucleotide exchange factor for DnaK and may function as a thermosensor. Unfolded proteins bind initially to DnaJ; upon interaction with the DnaJ-bound protein, DnaK hydrolyzes its bound ATP, resulting in the formation of a stable complex. GrpE releases ADP from DnaK; ATP binding to DnaK triggers the release of the substrate protein, thus completing the reaction cycle. Several rounds of ATP-dependent interactions between DnaJ, DnaK and GrpE are required for fully efficient folding. The chain is Protein GrpE from Acidithiobacillus ferrooxidans (strain ATCC 23270 / DSM 14882 / CIP 104768 / NCIMB 8455) (Ferrobacillus ferrooxidans (strain ATCC 23270)).